Here is a 396-residue protein sequence, read N- to C-terminus: Alanine racemase (396 aa).

Lys46 (proton acceptor; specific for D-alanine) is an active-site residue. Position 46 is an N6-(pyridoxal phosphate)lysine (Lys46). Arg145 is a binding site for substrate. The active-site Proton acceptor; specific for L-alanine is the Tyr280. Met328 is a binding site for substrate.

The protein belongs to the alanine racemase family. Pyridoxal 5'-phosphate is required as a cofactor.

The catalysed reaction is L-alanine = D-alanine. It participates in amino-acid biosynthesis; D-alanine biosynthesis; D-alanine from L-alanine: step 1/1. Catalyzes the interconversion of L-alanine and D-alanine. May also act on other amino acids. In Brucella ovis (strain ATCC 25840 / 63/290 / NCTC 10512), this protein is Alanine racemase (alr).